The primary structure comprises 215 residues: Protein FAM167A (215 aa).

2 disordered regions span residues 1–26 and 63–109; these read MSVP…PPDD and RPAA…LTTG. Residues 124-157 are a coiled coil; the sequence is LRKELAEMRLQDQQLARQLMRLRGDINKLKIEQT.

Belongs to the FAM167 (SEC) family.

The chain is Protein FAM167A (Fam167a) from Mus musculus (Mouse).